Consider the following 896-residue polypeptide: Isoleucine--tRNA ligase (896 aa).

Positions proline 57–histidine 67 match the 'HIGH' region motif. Glutamate 543 lines the L-isoleucyl-5'-AMP pocket. The 'KMSKS' region signature appears at lysine 584–serine 588. Lysine 587 lines the ATP pocket. Zn(2+) is bound by residues cysteine 869, cysteine 872, cysteine 885, and cysteine 888.

This sequence belongs to the class-I aminoacyl-tRNA synthetase family. IleS type 1 subfamily. Monomer. The cofactor is Zn(2+).

The protein localises to the cytoplasm. The enzyme catalyses tRNA(Ile) + L-isoleucine + ATP = L-isoleucyl-tRNA(Ile) + AMP + diphosphate. In terms of biological role, catalyzes the attachment of isoleucine to tRNA(Ile). As IleRS can inadvertently accommodate and process structurally similar amino acids such as valine, to avoid such errors it has two additional distinct tRNA(Ile)-dependent editing activities. One activity is designated as 'pretransfer' editing and involves the hydrolysis of activated Val-AMP. The other activity is designated 'posttransfer' editing and involves deacylation of mischarged Val-tRNA(Ile). The chain is Isoleucine--tRNA ligase from Acholeplasma laidlawii (strain PG-8A).